Consider the following 275-residue polypeptide: MSIQICNFPFHPKFALQPRAQRSTRIFARTENDSPQSKTSDQQLNLSVLRFTFGIPGFDESYLPRWIGYGFGSLLLLNHFSASAPISESQMRSEALGLSLAAFSIALPYIGKFLKGSVVEQRSLPEEGEQVFVISSNIGDSLKEDLAWATYVLLRNTSTIAVLISVQGELCVRGYWNCPDQMSKAQLHDWFKKKVDEIGLADVKETLYFPQYAGSALSLDILPDGTRSLFVQPLVQNTNEPQKVNGFLLVASTAGYAYSDKDRAWIGAMAEKFRG.

A chloroplast-targeting transit peptide spans methionine 1–arginine 19. Residues alanine 20–arginine 65 are Stromal-facing. A helical transmembrane segment spans residues tryptophan 66 to isoleucine 86. Residues serine 87–serine 93 lie on the Lumenal side of the membrane. Residues glutamate 94 to leucine 114 form a helical membrane-spanning segment. Residues lysine 115–glycine 275 lie on the Stromal side of the membrane.

It localises to the plastid. Its subcellular location is the chloroplast thylakoid membrane. Functionally, required for the biogenesis and accumulation of native cytochrome b6 in the thylakoid membrane. Controls the conversion of apocytochrome b6 to holocytochrome b6. Required for covalent binding of the c-type heme to cytochrome b6. This chain is Protein COFACTOR ASSEMBLY OF COMPLEX C SUBUNIT B CCB2, chloroplastic, found in Arabidopsis thaliana (Mouse-ear cress).